Here is a 103-residue protein sequence, read N- to C-terminus: Urease subunit beta (103 aa).

Belongs to the urease beta subunit family. In terms of assembly, heterotrimer of UreA (gamma), UreB (beta) and UreC (alpha) subunits. Three heterotrimers associate to form the active enzyme.

The protein resides in the cytoplasm. The catalysed reaction is urea + 2 H2O + H(+) = hydrogencarbonate + 2 NH4(+). Its pathway is nitrogen metabolism; urea degradation; CO(2) and NH(3) from urea (urease route): step 1/1. Its function is as follows. Ureolysis may allow urea to be employed as a nitrogen source for growth and produces ammonia which may protect from killing at low pH. This Streptococcus salivarius (strain 57.I) protein is Urease subunit beta.